Reading from the N-terminus, the 127-residue chain is Fluoride-specific ion channel FluC (127 aa).

4 helical membrane passes run 8 to 28 (LLIA…QYWF), 37 to 57 (PWGT…VYAI), 68 to 88 (WKFL…TFSY), and 100 to 120 (ILFL…AFAG). Na(+) contacts are provided by Gly78 and Thr81.

Belongs to the fluoride channel Fluc/FEX (TC 1.A.43) family.

It is found in the cell inner membrane. It catalyses the reaction fluoride(in) = fluoride(out). Na(+) is not transported, but it plays an essential structural role and its presence is essential for fluoride channel function. In terms of biological role, fluoride-specific ion channel. Important for reducing fluoride concentration in the cell, thus reducing its toxicity. The polypeptide is Fluoride-specific ion channel FluC (Leptospira interrogans serogroup Icterohaemorrhagiae serovar Lai (strain 56601)).